A 680-amino-acid polypeptide reads, in one-letter code: DNA ligase (680 aa).

NAD(+)-binding positions include 44–48, 93–94, and Glu125; these read DHVYD and SM. The N6-AMP-lysine intermediate role is filled by Lys127. NAD(+)-binding residues include Arg148, Glu182, Lys298, and Lys322. Residues Cys416, Cys419, Cys434, and Cys439 each contribute to the Zn(2+) site. The 81-residue stretch at 600–680 folds into the BRCT domain; the sequence is NPDSEWNGRR…QFSQAMKEEQ (81 aa).

This sequence belongs to the NAD-dependent DNA ligase family. LigA subfamily. The cofactor is Mg(2+). Mn(2+) is required as a cofactor.

The enzyme catalyses NAD(+) + (deoxyribonucleotide)n-3'-hydroxyl + 5'-phospho-(deoxyribonucleotide)m = (deoxyribonucleotide)n+m + AMP + beta-nicotinamide D-nucleotide.. DNA ligase that catalyzes the formation of phosphodiester linkages between 5'-phosphoryl and 3'-hydroxyl groups in double-stranded DNA using NAD as a coenzyme and as the energy source for the reaction. It is essential for DNA replication and repair of damaged DNA. The polypeptide is DNA ligase (Limosilactobacillus reuteri (strain DSM 20016) (Lactobacillus reuteri)).